Consider the following 185-residue polypeptide: Probable chorismate pyruvate-lyase (185 aa).

Residues arginine 84, leucine 122, and glutamate 178 each contribute to the substrate site.

Belongs to the UbiC family.

The protein localises to the cytoplasm. The catalysed reaction is chorismate = 4-hydroxybenzoate + pyruvate. It participates in cofactor biosynthesis; ubiquinone biosynthesis. Removes the pyruvyl group from chorismate, with concomitant aromatization of the ring, to provide 4-hydroxybenzoate (4HB) for the ubiquinone pathway. The protein is Probable chorismate pyruvate-lyase of Hydrogenovibrio crunogenus (strain DSM 25203 / XCL-2) (Thiomicrospira crunogena).